Here is a 281-residue protein sequence, read N- to C-terminus: Release factor glutamine methyltransferase (281 aa).

E142 and N184 together coordinate S-adenosyl-L-methionine. 184-187 (NPPY) serves as a coordination point for substrate. Positions 261–281 (AADHPDLNNRPRFATARKALP) are disordered.

Belongs to the protein N5-glutamine methyltransferase family. PrmC subfamily.

It catalyses the reaction L-glutaminyl-[peptide chain release factor] + S-adenosyl-L-methionine = N(5)-methyl-L-glutaminyl-[peptide chain release factor] + S-adenosyl-L-homocysteine + H(+). Functionally, methylates the class 1 translation termination release factors RF1/PrfA and RF2/PrfB on the glutamine residue of the universally conserved GGQ motif. In Streptomyces coelicolor (strain ATCC BAA-471 / A3(2) / M145), this protein is Release factor glutamine methyltransferase.